A 452-amino-acid chain; its full sequence is Selenide, water dikinase 2 (452 aa).

Ala-2 carries the N-acetylalanine modification. Ser-49 carries the phosphoserine modification. The active site involves Sec-63. Sec-63 is a non-standard amino acid (selenocysteine). ATP is bound at residue Lys-66. The disordered stretch occupies residues Pro-86–Pro-111. Positions Gly-95 to Leu-105 are enriched in low complexity. Residues Gly-121–Asp-123, Asp-141, Asp-164, and Gly-215–Thr-218 each bind ATP. Position 123 (Asp-123) interacts with Mg(2+). Residue Asp-164 coordinates Mg(2+). Residue Asp-319 coordinates Mg(2+).

The protein belongs to the selenophosphate synthase 1 family. Class I subfamily. In terms of assembly, homodimer. Requires Mg(2+) as cofactor. In terms of processing, truncated SEPHS2 proteins produced by failed UGA/Sec decoding are ubiquitinated by the CRL2(KLHDC3) complex, which recognizes the glycine (Gly) at the C-terminus of truncated SEPHS2 proteins.

It catalyses the reaction hydrogenselenide + ATP + H2O = selenophosphate + AMP + phosphate + 2 H(+). Functionally, synthesizes selenophosphate from selenide and ATP. This Mus musculus (Mouse) protein is Selenide, water dikinase 2 (Sephs2).